Reading from the N-terminus, the 83-residue chain is Cardiotoxin 7a (83 aa).

A signal peptide spans 1–21 (MKTLLLTLVVVTIVCLDLGYT). 4 disulfides stabilise this stretch: cysteine 24–cysteine 43, cysteine 36–cysteine 61, cysteine 65–cysteine 76, and cysteine 77–cysteine 82.

Belongs to the three-finger toxin family. Short-chain subfamily. Orphan group XV sub-subfamily. As to expression, expressed by the venom gland.

It localises to the secreted. It is found in the target cell membrane. In terms of biological role, has low cytotoxic activity. The protein is Cardiotoxin 7a of Naja atra (Chinese cobra).